A 172-amino-acid polypeptide reads, in one-letter code: NADH-quinone oxidoreductase subunit B (172 aa).

4 residues coordinate [4Fe-4S] cluster: Cys46, Cys47, Cys111, and Cys141.

This sequence belongs to the complex I 20 kDa subunit family. In terms of assembly, NDH-1 is composed of 14 different subunits. Subunits NuoB, C, D, E, F, and G constitute the peripheral sector of the complex. The cofactor is [4Fe-4S] cluster.

The protein resides in the cell membrane. It catalyses the reaction a quinone + NADH + 5 H(+)(in) = a quinol + NAD(+) + 4 H(+)(out). Its function is as follows. NDH-1 shuttles electrons from NADH, via FMN and iron-sulfur (Fe-S) centers, to quinones in the respiratory chain. The immediate electron acceptor for the enzyme in this species is believed to be a menaquinone. Couples the redox reaction to proton translocation (for every two electrons transferred, four hydrogen ions are translocated across the cytoplasmic membrane), and thus conserves the redox energy in a proton gradient. The polypeptide is NADH-quinone oxidoreductase subunit B (Bacillus mycoides (strain KBAB4) (Bacillus weihenstephanensis)).